A 640-amino-acid polypeptide reads, in one-letter code: MRRLRSLYLQSSICFRRFNHYSAKDTEALQRRLEQIPIENYRNFSIVAHVDHGKSTLSDRLLEFTGVIKAGDSNRQVLDKLEVERERGITIKAQTCTMFYYDKRRNKDYLLHLVDTPGHVDFRAEVSRSYASCGGALLLVDASQGVQAQTVANFYLAYSMNLKLIPVINKIDLDSANIPQAEAQIESTFELPRAEIIRVSAKTGINVKEDLLPAIIDRIPPPTGVGKKPFRALLVDSWYDSYLGVVLLVNIVDGVVKKGDRVVSAQTGKKYEIKELGIMYPDKVSMGCLRTGQVGYIVPGMKESKDAKIGDTIMHVGKESVTEVLDGFEDPKPMVFVGAFPADGTEFKSLDEDITRLVLNDRSVSLQRESSNALGQGWRLGFLGSLHASVFKDRLEKEYGSKLIITQPTVPYVIKFTNGEEKIITNPDDFPDLSLRKTRIDSLQEPYVEAIITLPQEYLGAVIKLCENNRGIQKEITYLNVTGQVLLKYEMPLAHLVDDFFGKLKSVSRGYGSLDYEDIGYKASDIVKLELVLNGKSVDALAQVMHRSQVERVGRKWAKKFKEYVKSQLYEVVIQARANNKVIARETIKARRKDVLAKLHASDVSRRKKLLVKQKEGKKQMKSVGNIQINQEAYQAFLRR.

The N-terminal 26 residues, 1–26, are a transit peptide targeting the mitochondrion; the sequence is MRRLRSLYLQSSICFRRFNHYSAKDT. Residues 39-223 form the tr-type G domain; it reads ENYRNFSIVA…AIIDRIPPPT (185 aa). GTP-binding positions include 48–55, 115–119, and 169–172; these read AHVDHGKS, DTPGH, and NKID.

Belongs to the TRAFAC class translation factor GTPase superfamily. Classic translation factor GTPase family. LepA subfamily.

Its subcellular location is the mitochondrion inner membrane. It catalyses the reaction GTP + H2O = GDP + phosphate + H(+). Functionally, promotes mitochondrial protein synthesis. May act as a fidelity factor of the translation reaction, by catalyzing a one-codon backward translocation of tRNAs on improperly translocated ribosomes. Binds to mitochondrial ribosomes in a GTP-dependent manner. The sequence is that of Translation factor GUF1, mitochondrial from Lachancea thermotolerans (strain ATCC 56472 / CBS 6340 / NRRL Y-8284) (Yeast).